Consider the following 292-residue polypeptide: tRNA-cytidine(32) 2-sulfurtransferase (292 aa).

The short motif at 53–58 (SGGKDS) is the PP-loop motif element. The [4Fe-4S] cluster site is built by cysteine 128, cysteine 131, and cysteine 219.

The protein belongs to the TtcA family. As to quaternary structure, homodimer. Mg(2+) is required as a cofactor. The cofactor is [4Fe-4S] cluster.

The protein resides in the cytoplasm. It catalyses the reaction cytidine(32) in tRNA + S-sulfanyl-L-cysteinyl-[cysteine desulfurase] + AH2 + ATP = 2-thiocytidine(32) in tRNA + L-cysteinyl-[cysteine desulfurase] + A + AMP + diphosphate + H(+). It functions in the pathway tRNA modification. Catalyzes the ATP-dependent 2-thiolation of cytidine in position 32 of tRNA, to form 2-thiocytidine (s(2)C32). The sulfur atoms are provided by the cysteine/cysteine desulfurase (IscS) system. In Cereibacter sphaeroides (strain ATCC 17023 / DSM 158 / JCM 6121 / CCUG 31486 / LMG 2827 / NBRC 12203 / NCIMB 8253 / ATH 2.4.1.) (Rhodobacter sphaeroides), this protein is tRNA-cytidine(32) 2-sulfurtransferase.